We begin with the raw amino-acid sequence, 399 residues long: Formaldehyde dismutase (399 aa).

Residue cysteine 46 coordinates Zn(2+). 47 to 51 (GSDQH) is a binding site for NAD(+). Zn(2+) is bound by residues histidine 67, cysteine 97, cysteine 100, cysteine 103, cysteine 111, and aspartate 170. Threonine 174 provides a ligand contact to NAD(+). Zn(2+) is bound at residue histidine 177. NAD(+) is bound by residues 197 to 198 (PV), 218 to 219 (DQ), arginine 223, valine 263, histidine 268, proline 299, 299 to 301 (PGI), and 336 to 338 (GMA).

Belongs to the zinc-containing alcohol dehydrogenase family. Homotetramer. Zn(2+) serves as cofactor. NAD(+) is required as a cofactor. The cofactor is NADH.

It carries out the reaction 2 formaldehyde + H2O = methanol + formate + H(+). Its activity is regulated as follows. Inhibited by the substrate analog pyrazole but not by NAD analogs such as AMP, ADP, ATP or N-methylnicotinamide chloride. Its function is as follows. Active against a range of primary alcohols as well as some secondary alcohols. Exhibits higher activity against alcohols with longer carbon chains. The polypeptide is Formaldehyde dismutase (Pseudomonas putida (Arthrobacter siderocapsulatus)).